Here is a 362-residue protein sequence, read N- to C-terminus: Heat-inducible transcription repressor HrcA (362 aa).

It belongs to the HrcA family.

Negative regulator of class I heat shock genes (grpE-dnaK-dnaJ and groELS operons). Prevents heat-shock induction of these operons. The polypeptide is Heat-inducible transcription repressor HrcA (Rhizobium leguminosarum bv. trifolii (strain WSM2304)).